A 234-amino-acid polypeptide reads, in one-letter code: Phosphoribosylaminoimidazole-succinocarboxamide synthase (234 aa).

It belongs to the SAICAR synthetase family.

The catalysed reaction is 5-amino-1-(5-phospho-D-ribosyl)imidazole-4-carboxylate + L-aspartate + ATP = (2S)-2-[5-amino-1-(5-phospho-beta-D-ribosyl)imidazole-4-carboxamido]succinate + ADP + phosphate + 2 H(+). Its pathway is purine metabolism; IMP biosynthesis via de novo pathway; 5-amino-1-(5-phospho-D-ribosyl)imidazole-4-carboxamide from 5-amino-1-(5-phospho-D-ribosyl)imidazole-4-carboxylate: step 1/2. The protein is Phosphoribosylaminoimidazole-succinocarboxamide synthase of Clostridium botulinum (strain ATCC 19397 / Type A).